A 230-amino-acid polypeptide reads, in one-letter code: Complex I assembly factor TMEM126B, mitochondrial (230 aa).

S34 carries the post-translational modification Phosphoserine. The next 4 membrane-spanning stretches (helical) occupy residues 72-92 (IYQMATFGTTAGFSGIFSNFL), 110-130 (LATLPFLSTVVTDKLFVIDAL), 141-161 (VFRSSLIGIVCGVFYPSSLAF), and 199-219 (IPLVFQIMFGILNGLYHYAVF).

The protein belongs to the TMEM126 family. As to quaternary structure, part of the mitochondrial complex I assembly/MCIA complex that comprises at least the core subunits TMEM126B, NDUFAF1, ECSIT and ACAD9 and complement subunits such as COA1 and TMEM186. Associates with the intermediate 370 kDa subcomplex of incompletely assembled complex I. Interacts with TMEM70.

It is found in the mitochondrion membrane. Its function is as follows. As part of the MCIA complex, involved in the assembly of the mitochondrial complex I. Participates in constructing the membrane arm of complex I. The protein is Complex I assembly factor TMEM126B, mitochondrial of Homo sapiens (Human).